The chain runs to 426 residues: Elongation factor Tu, mitochondrial (426 aa).

A mitochondrion-targeting transit peptide spans 1-27; the sequence is MFKNLAGSFRAVSRVAFKTRPSLVRSY. Residues 34–230 enclose the tr-type G domain; it reads KPHVNIGTIG…AVDEHIPTPT (197 aa). The G1 stretch occupies residues 43 to 50; the sequence is GHVDHGKT. Residue 43 to 50 coordinates GTP; that stretch reads GHVDHGKT. Residues 84–88 are G2; the sequence is GITIS. The segment at 105-108 is G3; that stretch reads DCPG. GTP is bound by residues 105–109 and 160–163; these read DCPGH and NKVD. A G4 region spans residues 160 to 163; it reads NKVD. Residues 198-200 form a G5 region; sequence SAL.

This sequence belongs to the TRAFAC class translation factor GTPase superfamily. Classic translation factor GTPase family. EF-Tu/EF-1A subfamily.

It is found in the mitochondrion. It functions in the pathway protein biosynthesis; polypeptide chain elongation. G-protein that, in its active GTP-bound form, binds to and delivers aminoacyl-tRNA to the A-site of ribosomes during protein biosynthesis. In the presence of a correct codon-anticodon match between the aminoacyl-tRNA and the A-site codon of the ribosome-bound mRNA, the ribosome acts as a GTPase activator and the GTP is hydrolyzed. The inactive GDP-bound form leaves the ribosome and must be recycled before binding another molecule of aminoacyl-tRNA. Required for mitochondrial protein biosynthesis and maintenance of mitochondrial DNA. This chain is Elongation factor Tu, mitochondrial (TUF1), found in Meyerozyma guilliermondii (strain ATCC 6260 / CBS 566 / DSM 6381 / JCM 1539 / NBRC 10279 / NRRL Y-324) (Yeast).